The chain runs to 740 residues: Arf-GAP with coiled-coil, ANK repeat and PH domain-containing protein 1 (740 aa).

A BAR domain is found at 1–226 (MTVKLDFEEC…RKELGAQLHQ (226 aa)). A required for formation of endosomal tubules when overexpressed with PIP5K1C region spans residues 1 to 382 (MTVKLDFEEC…RGPGQGSGHL (382 aa)). Residues 265 to 360 (GLVMEGHLFK…WVSAVQSSIA (96 aa)) form the PH domain. In terms of domain architecture, Arf-GAP spans 405 to 527 (GHVVAQVQSV…KFLTKLPEIR (123 aa)). The required for interaction with GULP1 stretch occupies residues 405–740 (GHVVAQVQSV…SRRSHDLHTL (336 aa)). The C4-type zinc finger occupies 420–443 (CCDCREPAPEWASINLGVTLCIQC). Tyr485 is subject to 3'-nitrotyrosine. The segment at 525–566 (EIRGRRGGRGRPRGQPPVPPKPSIRPRPGSLRSKPEPPSEDL) is prevents interaction with ITGB1 when S-554 is not phosphorylated. The interval 525–581 (EIRGRRGGRGRPRGQPPVPPKPSIRPRPGSLRSKPEPPSEDLGSLHPGALLFRASGH) is disordered. Over residues 538 to 549 (GQPPVPPKPSIR) the composition is skewed to pro residues. The residue at position 554 (Ser554) is a Phosphoserine; by PKB. ANK repeat units lie at residues 606–635 (DNAT…NVNQ), 639–668 (AGRG…DLGA), and 672–702 (EGRD…EAEA).

As to quaternary structure, banana-shaped homodimer laterally assembling into tetramers, the tetramers further pack helically onto the membrane. Interacts with GTP-bound ARF6. Interacts with third cytoplasmic loop of SLC2A4/GLUT4. Interacts with CLTC. Interacts with GULP1. Forms a complex with GDP-bound ARF6 and GULP1. Interacts with ITGB1; required for ITGB1 recycling. In terms of processing, phosphorylation at Ser-554 by PKB is required for interaction with ITGB1, export of ITGB1 from recycling endosomes to the cell surface and ITGB1-dependent cell migration. As to expression, highest level in lung and spleen. Low level in heart, kidney, liver and pancreas.

Its subcellular location is the recycling endosome membrane. GAP activity stimulated by phosphatidylinositol 4,5-bisphosphate (PIP2) and phosphatidic acid. Its function is as follows. GTPase-activating protein (GAP) for ADP ribosylation factor 6 (ARF6) required for clathrin-dependent export of proteins from recycling endosomes to trans-Golgi network and cell surface. Required for regulated export of ITGB1 from recycling endosomes to the cell surface and ITGB1-dependent cell migration. This Homo sapiens (Human) protein is Arf-GAP with coiled-coil, ANK repeat and PH domain-containing protein 1 (ACAP1).